Consider the following 304-residue polypeptide: ULP1-interacting protein 4 (304 aa).

The tract at residues 72 to 269 is disordered; that stretch reads DEYPKEVDEH…SIVKEGDANT (198 aa). The span at 73–83 shows a compositional bias: basic and acidic residues; sequence EYPKEVDEHSN. The span at 129–149 shows a compositional bias: polar residues; it reads TPSLKGNVTFPSPKTAISQDG. At serine 140 the chain carries Phosphoserine. Basic and acidic residues predominate over residues 155-183; sequence ETTRKERKYEHAPLNEVPVERDPKEENKE. 2 positions are modified to phosphoserine: serine 185 and serine 205.

As to quaternary structure, interacts with ULP1.

It is found in the endoplasmic reticulum membrane. The protein localises to the mitochondrion outer membrane. The protein resides in the nucleus envelope. The polypeptide is ULP1-interacting protein 4 (UIP4) (Saccharomyces cerevisiae (strain ATCC 204508 / S288c) (Baker's yeast)).